Here is a 475-residue protein sequence, read N- to C-terminus: Protein trichome birefringence-like 6 (475 aa).

The chain crosses the membrane as a helical; Signal-anchor for type II membrane protein span at residues 14-34 (VLAFIITIISSAIVFFTFFSS). The GDS motif signature appears at 211-213 (GDS). Residues 450-464 (DCSHWCLPGVPDTWN) carry the DCXHWCLPGXXDXWN motif motif.

The protein belongs to the PC-esterase family. TBL subfamily.

The protein resides in the membrane. Functionally, may act as a bridging protein that binds pectin and other cell wall polysaccharides. Probably involved in maintaining esterification of pectins. May be involved in the specific O-acetylation of cell wall polymers. The protein is Protein trichome birefringence-like 6 (TBL6) of Arabidopsis thaliana (Mouse-ear cress).